The following is a 295-amino-acid chain: Protoheme IX farnesyltransferase (295 aa).

Transmembrane regions (helical) follow at residues 30–50 (LVVLTGVTGIIIAPGNIHPLI), 51–71 (AVISTLCIALGSGAAGAINMW), 93–115 (ISRSSALEVGLVLSFISVTIMMI), 119–136 (YISGILLAISIGFYIYVY), 148–168 (IVIGGAAGALPPIIGWTSVTG), 175–195 (LVLFLIIFMWTPPHFWALSLL), 219–239 (IHILVYSILLFPITLLPGLFL), 244–264 (LYEITAIPLGLMFVVQAFQVF), and 275–295 (MFTYSIIYLFILFTCIMLSSF).

This sequence belongs to the UbiA prenyltransferase family. Protoheme IX farnesyltransferase subfamily.

It is found in the cell inner membrane. The catalysed reaction is heme b + (2E,6E)-farnesyl diphosphate + H2O = Fe(II)-heme o + diphosphate. It participates in porphyrin-containing compound metabolism; heme O biosynthesis; heme O from protoheme: step 1/1. In terms of biological role, converts heme B (protoheme IX) to heme O by substitution of the vinyl group on carbon 2 of heme B porphyrin ring with a hydroxyethyl farnesyl side group. This chain is Protoheme IX farnesyltransferase, found in Ehrlichia ruminantium (strain Welgevonden).